A 270-amino-acid chain; its full sequence is L-fucose dehydrogenase (270 aa).

Positions 19, 21, 40, 41, 62, 63, 89, 154, 158, 187, 189, and 191 each coordinate NAD(+).

This sequence belongs to the short-chain dehydrogenases/reductases (SDR) family.

It catalyses the reaction L-fucose + NAD(+) = L-fucono-1,5-lactone + NADH + H(+). The catalysed reaction is D-arabinose + NAD(+) = D-arabinono-1,5-lactone + NADH + H(+). It carries out the reaction L-galactose + NAD(+) = L-galactono-1,5-lactone + NADH + H(+). Its function is as follows. Catalyzes the NAD(+)-dependent oxidation of L-fucose, yielding L-fucono-1,5-lactone, which rapidly converts spontaneously to L-fucone-1,4-lactone. Does not use NADPH. Displays low activity on L-fucose, D-arabinose and L-galactose compared with rabbit and human. This is consitent with the low L-fucose metabolism observed in this species. The chain is L-fucose dehydrogenase (Hsd17b14) from Rattus norvegicus (Rat).